We begin with the raw amino-acid sequence, 356 residues long: DNA polymerase IV (356 aa).

Positions isoleucine 6–glycine 187 constitute a UmuC domain. Positions 10 and 105 each coordinate Mg(2+). Glutamate 106 is a catalytic residue.

The protein belongs to the DNA polymerase type-Y family. In terms of assembly, monomer. It depends on Mg(2+) as a cofactor.

It localises to the cytoplasm. It carries out the reaction DNA(n) + a 2'-deoxyribonucleoside 5'-triphosphate = DNA(n+1) + diphosphate. Its function is as follows. Poorly processive, error-prone DNA polymerase involved in untargeted mutagenesis. Copies undamaged DNA at stalled replication forks, which arise in vivo from mismatched or misaligned primer ends. These misaligned primers can be extended by PolIV. Exhibits no 3'-5' exonuclease (proofreading) activity. May be involved in translesional synthesis, in conjunction with the beta clamp from PolIII. In Staphylococcus epidermidis (strain ATCC 35984 / DSM 28319 / BCRC 17069 / CCUG 31568 / BM 3577 / RP62A), this protein is DNA polymerase IV.